The primary structure comprises 231 residues: Class II histocompatibility antigen, B-L beta chain (231 aa).

Positions 1–89 (FFQWSATVEC…IVAPLTLQRR (89 aa)) are beta-1. The Extracellular portion of the chain corresponds to 1–194 (FFQWSATVEC…PGDVSRSKLL (194 aa)). 2 disulfides stabilise this stretch: cysteine 10–cysteine 74 and cysteine 111–cysteine 167. A glycan (N-linked (GlcNAc...) asparagine) is linked at asparagine 14. The interval 90–182 (EPKVRIFALQ…SLQQPITQRW (93 aa)) is beta-2. The Ig-like C1-type domain maps to 91–179 (PKVRIFALQS…EHTSLQQPIT (89 aa)). The tract at residues 183 to 194 (EPPGDVSRSKLL) is connecting peptide. A helical transmembrane segment spans residues 195–219 (MGVGGFVLGLVYLALGIFFFLCSKK). The Cytoplasmic segment spans residues 220–231 (GQPDPTSPGILN).

This sequence belongs to the MHC class II family.

It localises to the membrane. This chain is Class II histocompatibility antigen, B-L beta chain, found in Gallus gallus (Chicken).